A 396-amino-acid chain; its full sequence is Formate-dependent phosphoribosylglycinamide formyltransferase (396 aa).

N(1)-(5-phospho-beta-D-ribosyl)glycinamide-binding positions include 25-26 (EL) and E85. Residues R117, K158, 163–168 (SSGKGQ), 198–201 (EAFI), and E206 each bind ATP. The ATP-grasp domain occupies 122-311 (RLAAETLAIP…EFALHVRAIL (190 aa)). Mg(2+) contacts are provided by E270 and E282. Residues D289, K359, and 366–367 (RR) contribute to the N(1)-(5-phospho-beta-D-ribosyl)glycinamide site.

The protein belongs to the PurK/PurT family. In terms of assembly, homodimer.

It catalyses the reaction N(1)-(5-phospho-beta-D-ribosyl)glycinamide + formate + ATP = N(2)-formyl-N(1)-(5-phospho-beta-D-ribosyl)glycinamide + ADP + phosphate + H(+). It participates in purine metabolism; IMP biosynthesis via de novo pathway; N(2)-formyl-N(1)-(5-phospho-D-ribosyl)glycinamide from N(1)-(5-phospho-D-ribosyl)glycinamide (formate route): step 1/1. Functionally, involved in the de novo purine biosynthesis. Catalyzes the transfer of formate to 5-phospho-ribosyl-glycinamide (GAR), producing 5-phospho-ribosyl-N-formylglycinamide (FGAR). Formate is provided by PurU via hydrolysis of 10-formyl-tetrahydrofolate. The sequence is that of Formate-dependent phosphoribosylglycinamide formyltransferase from Shewanella frigidimarina (strain NCIMB 400).